Here is a 106-residue protein sequence, read N- to C-terminus: Iron-sulfur cluster assembly protein CyaY (106 aa).

It belongs to the frataxin family.

Its function is as follows. Involved in iron-sulfur (Fe-S) cluster assembly. May act as a regulator of Fe-S biogenesis. The sequence is that of Iron-sulfur cluster assembly protein CyaY from Escherichia coli O127:H6 (strain E2348/69 / EPEC).